A 133-amino-acid polypeptide reads, in one-letter code: uncharacterized protein (133 aa).

This is an uncharacterized protein from Human adenovirus B serotype 7 (HAdV-7).